Consider the following 170-residue polypeptide: Co-chaperone protein HscB homolog (170 aa).

In terms of domain architecture, J spans 5 to 79 (DHFSLFGLPA…RARYLCEQAG (75 aa)).

Belongs to the HscB family. Interacts with HscA and stimulates its ATPase activity.

Co-chaperone involved in the maturation of iron-sulfur cluster-containing proteins. Seems to help targeting proteins to be folded toward HscA. In Bordetella petrii (strain ATCC BAA-461 / DSM 12804 / CCUG 43448), this protein is Co-chaperone protein HscB homolog.